We begin with the raw amino-acid sequence, 278 residues long: Small ribosomal subunit protein uS3 (278 aa).

A KH type-2 domain is found at 39 to 107; sequence LRKAISKKYV…KVQLNIVEIS (69 aa). The segment at 255-278 is disordered; it reads AEIPAEEKPKRVVKKAENITKEEE.

The protein belongs to the universal ribosomal protein uS3 family. As to quaternary structure, part of the 30S ribosomal subunit. Forms a tight complex with proteins S10 and S14.

Its function is as follows. Binds the lower part of the 30S subunit head. Binds mRNA in the 70S ribosome, positioning it for translation. This chain is Small ribosomal subunit protein uS3, found in Dehalococcoides mccartyi (strain ATCC BAA-2100 / JCM 16839 / KCTC 5957 / BAV1).